A 113-amino-acid polypeptide reads, in one-letter code: Large ribosomal subunit protein bL17 (113 aa).

The protein belongs to the bacterial ribosomal protein bL17 family. In terms of assembly, part of the 50S ribosomal subunit. Contacts protein L32.

This chain is Large ribosomal subunit protein bL17, found in Clostridium botulinum (strain Loch Maree / Type A3).